The primary structure comprises 467 residues: Putative gluconeogenesis factor (467 aa).

A compositionally biased stretch (pro residues) spans 1–12; it reads MSAPPAPPPDRS. The interval 1–27 is disordered; sequence MSAPPAPPPDRSAPPDRTDSAQTEPTR.

The protein belongs to the gluconeogenesis factor family.

The protein localises to the cytoplasm. In terms of biological role, required for morphogenesis under gluconeogenic growth conditions. This chain is Putative gluconeogenesis factor, found in Deinococcus radiodurans (strain ATCC 13939 / DSM 20539 / JCM 16871 / CCUG 27074 / LMG 4051 / NBRC 15346 / NCIMB 9279 / VKM B-1422 / R1).